A 462-amino-acid polypeptide reads, in one-letter code: Iroquois-class homeodomain protein irx-1-B (462 aa).

Residues 121 to 183 constitute a DNA-binding region (homeobox; TALE-type); the sequence is DPGRPKNATR…NARRRLKKEN (63 aa). 3 disordered regions span residues 191 to 302, 314 to 339, and 405 to 462; these read GKED…PHSK, SPDG…QHPA, and SLSS…LPSA. Composition is skewed to acidic residues over residues 210-220 and 228-239; these read EDDEEIDLESI and NDGEQSNEEEDE. The segment covering 240-257 has biased composition (basic and acidic residues); sequence KLDHFRHGEKVSLKKESE. Over residues 410–426 the composition is skewed to basic and acidic residues; sequence RTPERTSPKHSDRENLP. A compositionally biased stretch (polar residues) spans 446–455; the sequence is FSQQEGTSRI.

This sequence belongs to the TALE/IRO homeobox family.

It localises to the nucleus. Functionally, acts partially redundantly with other irx members in neural patterning. Required for formation of the posterior forebrain, midbrain, hindbrain, and to a lesser extent, spinal cord. Acts early in neural plate development to induce expression of some but not all proneural genes, and specify a neural precursor state. Also up-regulates repressors that prevent neuronal differentiation. Patterns the neuroectoderm in both the anterior/posterior and dorsal/ventral axes. Acts primarily as a transcriptional repressor during neural development, and binds to the bmp4 promoter to repress gene expression and thus mediate down-regulation of bmp4 by wnt signaling. Controls multiple processes through bmp4-repression including neural plate development, neural crest specification and Spemann organizer development. Involved in the specification of the preplacodal field at the anterior border of the neural plate. Regulates the genetic cascade of interactions that are necessary for positioning the isthmus organizer and the formation of the midbrain-hindbrain boundary. Required during at least two stages of pronephros kidney development; during neurula stages, maintains transcription of key renal genes to define the size and identity of the pronephric anlage, probably in part through regulation of bmp-signaling. Subsequently required for proper formation of the intermediate tubule segment of the pronephros. Acts principally as a transcriptional activator during pronephros development. This Xenopus laevis (African clawed frog) protein is Iroquois-class homeodomain protein irx-1-B (irx1-b).